A 63-amino-acid chain; its full sequence is KIDGYPVDYWNCKRICWYNNKYCNDLCKGLKADSGYCWGWTLSCYCQGLPDNARIKRSGRCRA.

In terms of domain architecture, LCN-type CS-alpha/beta spans 2 to 62; sequence IDGYPVDYWN…ARIKRSGRCR (61 aa). 4 cysteine pairs are disulfide-bonded: Cys12-Cys61, Cys16-Cys37, Cys23-Cys44, and Cys27-Cys46.

The protein belongs to the long (4 C-C) scorpion toxin superfamily. Sodium channel inhibitor family. Alpha subfamily. In terms of tissue distribution, expressed by the venom gland.

It localises to the secreted. Its function is as follows. This neurotoxin acts on sodium and calcium channels. Potently inhibits native voltage-gated T-type calcium channel activity in mouse male germ cells. Also binds Cav3.1/CACNA1G, Cav3.2/CACNA1H, and Cav3.3/CACNA1I T-type calcium channels and inhibits the channels by modifying voltage-dependent gating. In addition, binds and significantly inhibits the inactivation of activated sodium channels (Nav1.2/SCN2A and Nav1.5/SCN5A). The protein is Kurtoxin-like II of Parabuthus granulatus (Granulated thick-tailed scorpion).